Here is a 98-residue protein sequence, read N- to C-terminus: 10 kDa chaperonin (98 aa).

The protein belongs to the GroES chaperonin family. As to quaternary structure, forms stable complexes with CPN60 in the presence of ATP.

It is found in the cytoplasm. Seems to function only as a co-chaperone, along with cpn60, and in certain cases is essential for the discharge of biologically active proteins from cpn60. The sequence is that of 10 kDa chaperonin from Brassica napus (Rape).